The primary structure comprises 230 residues: Probable fimbrial chaperone SfmC (230 aa).

A signal peptide spans 1–23 (MMTKIKLLMLIIFYLIISASAHA).

This sequence belongs to the periplasmic pilus chaperone family.

The protein localises to the periplasm. Part of the sfmACDHF fimbrial operon. Could contribute to adhesion to various surfaces in specific environmental niches. Increases adhesion to eukaryotic T24 bladder epithelial cells in the absence of fim genes. The chain is Probable fimbrial chaperone SfmC (sfmC) from Escherichia coli (strain K12).